The following is a 200-amino-acid chain: Small ribosomal subunit protein eS1 (200 aa).

This sequence belongs to the eukaryotic ribosomal protein eS1 family. In terms of assembly, part of the 30S ribosomal subunit.

This chain is Small ribosomal subunit protein eS1, found in Thermococcus kodakarensis (strain ATCC BAA-918 / JCM 12380 / KOD1) (Pyrococcus kodakaraensis (strain KOD1)).